We begin with the raw amino-acid sequence, 179 residues long: ATP-dependent protease subunit HslV (179 aa).

The active site involves Thr7. The Na(+) site is built by Gly162, Cys165, and Thr168.

It belongs to the peptidase T1B family. HslV subfamily. A double ring-shaped homohexamer of HslV is capped on each side by a ring-shaped HslU homohexamer. The assembly of the HslU/HslV complex is dependent on binding of ATP.

Its subcellular location is the cytoplasm. It carries out the reaction ATP-dependent cleavage of peptide bonds with broad specificity.. Allosterically activated by HslU binding. In terms of biological role, protease subunit of a proteasome-like degradation complex believed to be a general protein degrading machinery. This is ATP-dependent protease subunit HslV from Aromatoleum aromaticum (strain DSM 19018 / LMG 30748 / EbN1) (Azoarcus sp. (strain EbN1)).